The primary structure comprises 363 residues: Forkhead box protein I1 (363 aa).

The segment covering 1–18 (MNPVQQPAQQRSPASSLP) has biased composition (low complexity). 3 disordered regions span residues 1–24 (MNPV…KRAQ), 210–269 (DNGN…SPPA), and 344–363 (TTAQ…QGRY). Residues 125–219 (RPPYSYSALI…DNGNFRRKRK (95 aa)) constitute a DNA-binding region (fork-head). Over residues 231–243 (KIGEDHLNPKGKE) the composition is skewed to basic and acidic residues. Composition is skewed to low complexity over residues 244–258 (SPPM…EPSP) and 347–363 (QKQP…QGRY).

It localises to the nucleus. In terms of biological role, transcription factor. Essential for ventral specification of the early cephalic (head) ectoderm during gastrulation, playing a role in the 'non-neural' versus 'neural' cell fate choice. Binds to DNA via the target sequence 5'-[AG]TAAA[CT]A-3', with 5'-ATAAACA-3' being the preferred binding site. This is Forkhead box protein I1 from Xenopus tropicalis (Western clawed frog).